The primary structure comprises 526 residues: Rho guanine nucleotide exchange factor 3 (526 aa).

Residues Glu-20 to Lys-40 form a disordered region. A phosphoserine mark is found at Ser-47 and Ser-70. The DH domain maps to Lys-122 to Lys-304. The region spanning Ile-291–Glu-449 is the PH domain. Disordered stretches follow at residues Glu-464 to Val-502 and Glu-507 to Val-526. The span at Ser-466 to Arg-475 shows a compositional bias: polar residues.

In terms of assembly, interacts with RHOA and RHOB.

It is found in the cytoplasm. Its function is as follows. Acts as a guanine nucleotide exchange factor (GEF) for RhoA and RhoB GTPases. In Macaca fascicularis (Crab-eating macaque), this protein is Rho guanine nucleotide exchange factor 3 (ARHGEF3).